The following is a 395-amino-acid chain: Glutamate N-acetyltransferase (395 aa).

Positions 146, 169, 180, 263, 390, and 395 each coordinate substrate. The active-site Nucleophile is the T180.

This sequence belongs to the ArgJ family. As to quaternary structure, heterotetramer of two alpha and two beta chains.

It localises to the cytoplasm. It carries out the reaction N(2)-acetyl-L-ornithine + L-glutamate = N-acetyl-L-glutamate + L-ornithine. Its pathway is amino-acid biosynthesis; L-arginine biosynthesis; L-ornithine and N-acetyl-L-glutamate from L-glutamate and N(2)-acetyl-L-ornithine (cyclic): step 1/1. Catalyzes the transfer of the acetyl group from N(2)-acetylornithine to glutamate, forming N-acetylglutamate and L-ornithine. This Methanosarcina mazei (strain ATCC BAA-159 / DSM 3647 / Goe1 / Go1 / JCM 11833 / OCM 88) (Methanosarcina frisia) protein is Glutamate N-acetyltransferase.